Reading from the N-terminus, the 746-residue chain is NAD(P)H-quinone oxidoreductase subunit 5, chloroplastic (746 aa).

Transmembrane regions (helical) follow at residues 9-29 (YIILFLPLPVTMSIGFGLLFV), 40-60 (WAFVSVLLLSMVMGFSVNLAI), 88-108 (LIDPLTSIMSLLISTVGIMVL), 125-145 (FAYMSFFNTSMLGLVTSSNLI), 147-167 (IHIFWELVGMCSYLLIGFWFT), 185-205 (GDFGLLLGILGFYWITGSLEF), 225-245 (FAILCACLLFLGAVAKSAQFP), 258-278 (TPISALIHAATMVAAGIFLVA), 283-303 (LFIVIPYIMNLISLIGIITLL), 327-347 (LGYIMLALGIGSYRAALFHLI), 354-374 (ALLFLGSGSIIHSMEPVVGYS), 396-416 (TTFLLGTLSLCGIPPLACFWS), 425-445 (WLYSPIFAIIAYFTAGLTAFY), 554-574 (LFPLLVLVLFTLVVGLIGIPF), 610-630 (IFSVSVSLFGLFIASIFYGSV), and 726-746 (YLFLYLSYVSIFLIFYQYFDF).

This sequence belongs to the complex I subunit 5 family. NDH is composed of at least 16 different subunits, 5 of which are encoded in the nucleus.

Its subcellular location is the plastid. It localises to the chloroplast thylakoid membrane. The catalysed reaction is a plastoquinone + NADH + (n+1) H(+)(in) = a plastoquinol + NAD(+) + n H(+)(out). It catalyses the reaction a plastoquinone + NADPH + (n+1) H(+)(in) = a plastoquinol + NADP(+) + n H(+)(out). Its function is as follows. NDH shuttles electrons from NAD(P)H:plastoquinone, via FMN and iron-sulfur (Fe-S) centers, to quinones in the photosynthetic chain and possibly in a chloroplast respiratory chain. The immediate electron acceptor for the enzyme in this species is believed to be plastoquinone. Couples the redox reaction to proton translocation, and thus conserves the redox energy in a proton gradient. The chain is NAD(P)H-quinone oxidoreductase subunit 5, chloroplastic (ndhF) from Dioscorea elephantipes (Elephant's foot yam).